The following is a 477-amino-acid chain: Cytochrome c-552 (477 aa).

The N-terminal stretch at 1–26 (MVRISTSISYLWGMVASLFLMMPAYS) is a signal peptide. His-94 serves as a coordination point for heme c. The heme site is built by Cys-122, Cys-125, and Lys-126. The heme c site is built by Cys-160, Cys-163, His-164, Cys-209, Cys-212, and His-213. Residues Glu-215, Tyr-216, Lys-261, and Gln-263 each coordinate Ca(2+). Residue Tyr-216 participates in substrate binding. His-264 is a substrate binding site. Residues His-275, Cys-282, Cys-285, His-286, His-301, Cys-314, Cys-317, His-318, and His-393 each coordinate heme c.

Belongs to the cytochrome c-552 family. It depends on Ca(2+) as a cofactor. The cofactor is heme c.

It localises to the periplasm. It catalyses the reaction 6 Fe(III)-[cytochrome c] + NH4(+) + 2 H2O = 6 Fe(II)-[cytochrome c] + nitrite + 8 H(+). It participates in nitrogen metabolism; nitrate reduction (assimilation). Catalyzes the reduction of nitrite to ammonia, consuming six electrons in the process. In Pectobacterium carotovorum subsp. carotovorum (strain PC1), this protein is Cytochrome c-552.